We begin with the raw amino-acid sequence, 231 residues long: Ribonuclease HI (231 aa).

An RNase H type-1 domain is found at 1–146; sequence MRERAVAACD…ADRAASQAAV (146 aa). Mg(2+) is bound by residues aspartate 10, glutamate 50, aspartate 72, and aspartate 138. Composition is skewed to low complexity over residues 148 to 157 and 166 to 181; these read QEAAGSALGS and VPAA…SGAA. 2 disordered regions span residues 148–192 and 212–231; these read QEAA…SART and PIAK…VAAG.

Belongs to the RNase H family. As to quaternary structure, monomer. It depends on Mg(2+) as a cofactor.

It is found in the cytoplasm. The enzyme catalyses Endonucleolytic cleavage to 5'-phosphomonoester.. Its function is as follows. Endonuclease that specifically degrades the RNA of RNA-DNA hybrids. In Streptomyces coelicolor (strain ATCC BAA-471 / A3(2) / M145), this protein is Ribonuclease HI (rnhA).